Consider the following 508-residue polypeptide: Ell-associated factor Eaf (508 aa).

Polar residues-rich tracts occupy residues 140–150 (GQGQLHSQGAN) and 161–190 (GHSTGTAPKMENSTMRISTKTKVSTGSRRN). 2 disordered regions span residues 140–226 (GQGQ…WDAN) and 251–508 (HNSG…DDDE). At S200 the chain carries Phosphoserine. Over residues 251-268 (HNSGHANTSGSSTGSATG) the composition is skewed to low complexity. Composition is skewed to polar residues over residues 272 to 281 (FGSTSSSSHM) and 296 to 313 (QQMQQRLSPPMAQQQQPS). Residues 314 to 341 (NYGRGYNGGHNHVQQQQQRNSPQQQRPP) show a composition bias toward low complexity. Residues 391–406 (DSSDSDSGSDSDDSTE) show a composition bias toward acidic residues. 3 stretches are compositionally biased toward low complexity: residues 412-444 (QGQQQDHQQQQQQQVYQNHNHQQQQIAQQHLNQ), 461-477 (HQHQQQMAPHQQQQKQQ), and 489-502 (NDLLQNDLQLSSNS).

The protein belongs to the EAF family.

It localises to the nucleus. In terms of biological role, promotes transcriptional elongation by Su(Tpl)/ELL. Essential for development. The protein is Ell-associated factor Eaf of Drosophila erecta (Fruit fly).